The following is a 258-amino-acid chain: Large ribosomal subunit protein uL15c (258 aa).

The N-terminal 65 residues, 1–65 (MSAASLIPVS…NVKSSGENVR (65 aa)), are a transit peptide targeting the chloroplast. A disordered region spans residues 67-90 (RLDNLGPQPGSRKRPKRKGRGIAA). The span at 77-86 (SRKRPKRKGR) shows a compositional bias: basic residues.

Belongs to the universal ribosomal protein uL15 family. In terms of assembly, part of the 50S ribosomal subunit.

It is found in the plastid. The protein resides in the chloroplast. In Pisum sativum (Garden pea), this protein is Large ribosomal subunit protein uL15c (RPL15).